We begin with the raw amino-acid sequence, 187 residues long: Small ribosomal subunit protein uS7 (187 aa).

The protein belongs to the universal ribosomal protein uS7 family. Part of the 30S ribosomal subunit.

In terms of biological role, one of the primary rRNA binding proteins, it binds directly to 16S rRNA where it nucleates assembly of the head domain of the 30S subunit. Is located at the subunit interface close to the decoding center. This Methanosphaera stadtmanae (strain ATCC 43021 / DSM 3091 / JCM 11832 / MCB-3) protein is Small ribosomal subunit protein uS7.